A 794-amino-acid polypeptide reads, in one-letter code: MKFSESWLRTLVDPKLSSEELSHLLTMAGLEVEELDPVAPAFDNVVVAHVLDVVKHPDADRLNVCQVDTGSGAPTTIVCGAPNVAVGLKVPCALPGAKLPGDFTIKIAKVRGIESSGMLCSAKELGIAEEASGLLVLPSDAPVGQAIRQYLDLDDNLFELKLTPNRADCLSLLGIAREVGAITGAATSLPVVPEVVASIADSRAVVLDAPEACPLYCGRVLKGVNAKAPTPEWMKRRLERSGIRAISALVDVTNYVMLELGQPLHAFDNTRLEGAVHARLAKPEEKLLLLNEQTIAVDADVLVIADDVKPLAMAGIMGGEESGITLETSELFLESAFFAPKAIAGRARRYGFGSDASHRFERGVDFGGARRAIERATQLILEICGGQAGPVVEAKAVLPVRKPVLLRTARAEMVLGLPLGAERIAGLFAGLDLSFVCEGDNFQVTPPSWRFDMEVEEDLIEEIARLYGYDNIPSVSPRGALKMQVQPEARRPAYRLRQMLADRGYQEVVNFAFVEAAWEADFAENVAEAELIRLANPIASQMAVMRSTLFGGLISNLITNLKRKQTRVRLFEVGRTFHRAADAVPVNGFHQPWKLAGLAFGGALPEGWGSGARKVDFYDVKGDIEALLAPAVLRFEKLAHPALHPGRAARILFDGRDIGCIGEVHPEWVQKYDLPQAPVVFELDFDAVKAANVPAYAEVSKFPPVIRDLAIVVDQNVVLQTLLDGLKGQVSDLIQDIQLFDVYVGKGVPENKKSLAFRIVMQDTQRTLQDSEVDAAMQQLVSCFEQAFGAQLRA.

The region spanning Ala39 to Arg148 is the tRNA-binding domain. In terms of domain architecture, B5 spans Pro399–Ser474. Mg(2+)-binding residues include Asp452, Asp458, Glu461, and Glu462. The FDX-ACB domain occupies Ser700–Arg793.

It belongs to the phenylalanyl-tRNA synthetase beta subunit family. Type 1 subfamily. As to quaternary structure, tetramer of two alpha and two beta subunits. It depends on Mg(2+) as a cofactor.

It is found in the cytoplasm. The enzyme catalyses tRNA(Phe) + L-phenylalanine + ATP = L-phenylalanyl-tRNA(Phe) + AMP + diphosphate + H(+). The protein is Phenylalanine--tRNA ligase beta subunit of Dechloromonas aromatica (strain RCB).